Consider the following 442-residue polypeptide: MASSAHSDSASSDAPAELPAEILAAAPWSAPADDSEHLRITAVRTFLTAPQGCPYVIVRVETNQPGLYGLGCASDPQRTLAIRSVVDDYYAPMLLGRDPADIEDLHRLLFNSGYWRGGSIGQNALAGVDVALWDIKGKVAGLPLHQLLGGRAREAAEAYTHVDGDNAGEIAEKVLAAHERGYRHVRVQVSVPGTDTYGTAPRDAAEARRRELRAGSWDSLAYLRHVPPVLREIRERVGTGVELLHDAHERLTPSQARELVHEVEDARLFFLEDALAPEDAAHFDQLRAAGSVPLAVGELYHDVMMYLPLLQRQVIDFARIRVPTLGGLTPTRKLVAAVELFGARTAPHGPGDVSPVGMAANLGLDLSSPAFGVQEAATFREPTREVFPGTPVPERGRFHGSDRPGLGVDFDEVAARKYPVPEPLRHDRWALLRNGDGSVQRP.

Asp246 serves as a coordination point for Mg(2+). Residue His248 participates in D-arabinonate binding. The Mg(2+) site is built by Glu272 and Glu298. 4 residues coordinate D-arabinonate: Glu298, Arg319, His348, and Glu375.

It belongs to the mandelate racemase/muconate lactonizing enzyme family. GalD subfamily.

Its function is as follows. Has no detectable activity with D-mannonate and with a panel of 70 other acid sugars (in vitro), in spite of the conservation of the residues that are expected to be important for catalytic activity and cofactor binding. May have evolved a divergent function. The chain is D-galactonate dehydratase family member SSBG_02010 from Streptomyces sp. (strain SPB074).